The sequence spans 492 residues: Argininosuccinate lyase (492 aa).

Belongs to the lyase 1 family. Argininosuccinate lyase subfamily.

The protein localises to the cytoplasm. The enzyme catalyses 2-(N(omega)-L-arginino)succinate = fumarate + L-arginine. Its pathway is amino-acid biosynthesis; L-arginine biosynthesis; L-arginine from L-ornithine and carbamoyl phosphate: step 3/3. In Methanocorpusculum labreanum (strain ATCC 43576 / DSM 4855 / Z), this protein is Argininosuccinate lyase.